Here is a 360-residue protein sequence, read N- to C-terminus: Phospho-N-acetylmuramoyl-pentapeptide-transferase (360 aa).

Transmembrane regions (helical) follow at residues 25 to 45 (RGILGVLTALSLALWLGPWMI), 73 to 93 (TMGGALILSAIAVSTLLWADL), 97 to 117 (YVWVVLIVTLAFGAIGWVDDY), 134 to 154 (YFWQSVFGLAAAVFLYKTAPT), 168 to 188 (VTIPLGVGFVVLTYFVIVGSS), 199 to 219 (GLAIMPTVMVGGALGIFCYLS), 236 to 256 (SGELIVFCGALIGAGLGFLWF), 263 to 283 (VFMGDVGALALGAALGTIAVI), 288 to 308 (IVLFIMGGIFVVETLSVVIQV), and 338 to 358 (VIVRFWIITVILVLIGLATLK).

This sequence belongs to the glycosyltransferase 4 family. MraY subfamily. Mg(2+) is required as a cofactor.

The protein resides in the cell inner membrane. It carries out the reaction UDP-N-acetyl-alpha-D-muramoyl-L-alanyl-gamma-D-glutamyl-meso-2,6-diaminopimeloyl-D-alanyl-D-alanine + di-trans,octa-cis-undecaprenyl phosphate = di-trans,octa-cis-undecaprenyl diphospho-N-acetyl-alpha-D-muramoyl-L-alanyl-D-glutamyl-meso-2,6-diaminopimeloyl-D-alanyl-D-alanine + UMP. It participates in cell wall biogenesis; peptidoglycan biosynthesis. In terms of biological role, catalyzes the initial step of the lipid cycle reactions in the biosynthesis of the cell wall peptidoglycan: transfers peptidoglycan precursor phospho-MurNAc-pentapeptide from UDP-MurNAc-pentapeptide onto the lipid carrier undecaprenyl phosphate, yielding undecaprenyl-pyrophosphoryl-MurNAc-pentapeptide, known as lipid I. This is Phospho-N-acetylmuramoyl-pentapeptide-transferase from Pseudomonas putida (strain ATCC 700007 / DSM 6899 / JCM 31910 / BCRC 17059 / LMG 24140 / F1).